We begin with the raw amino-acid sequence, 123 residues long: PCNA-associated factor (123 aa).

Residues 1-123 are disordered; the sequence is MVRTKADCAG…SEEAADSGDE (123 aa). The D-box motif lies at 26–37; the sequence is RKTFGSSSSGSN. Residues 66–77 carry the PIP-box motif; it reads QKGIGDFFGSPS. Positions 83-85 match the KEN box motif; that stretch reads KEN. The Initiation motif motif lies at 93–105; that stretch reads EAGGSGAGKKPRK. Acidic residues predominate over residues 113 to 123; the sequence is PSEEAADSGDE.

Interacts with pcna.

The protein resides in the nucleus. Its subcellular location is the cytoplasm. It localises to the perinuclear region. PCNA-binding protein that acts as a regulator of DNA repair during DNA replication. Following DNA damage, the interaction with pcna is disrupted, facilitating the interaction between monoubiquitinated pcna and the translesion DNA synthesis DNA polymerase eta (polh) at stalled replisomes, facilitating the bypass of replication-fork-blocking lesions. Also acts as a regulator of centrosome number. In Xenopus laevis (African clawed frog), this protein is PCNA-associated factor.